Here is a 373-residue protein sequence, read N- to C-terminus: UDP-N-acetylglucosamine--N-acetylmuramyl-(pentapeptide) pyrophosphoryl-undecaprenol N-acetylglucosamine transferase (373 aa).

Residues T14–G16, N128, R165, S199, and Q295 contribute to the UDP-N-acetyl-alpha-D-glucosamine site.

Belongs to the glycosyltransferase 28 family. MurG subfamily.

It is found in the cell membrane. It carries out the reaction di-trans,octa-cis-undecaprenyl diphospho-N-acetyl-alpha-D-muramoyl-L-alanyl-D-glutamyl-meso-2,6-diaminopimeloyl-D-alanyl-D-alanine + UDP-N-acetyl-alpha-D-glucosamine = di-trans,octa-cis-undecaprenyl diphospho-[N-acetyl-alpha-D-glucosaminyl-(1-&gt;4)]-N-acetyl-alpha-D-muramoyl-L-alanyl-D-glutamyl-meso-2,6-diaminopimeloyl-D-alanyl-D-alanine + UDP + H(+). It functions in the pathway cell wall biogenesis; peptidoglycan biosynthesis. In terms of biological role, cell wall formation. Catalyzes the transfer of a GlcNAc subunit on undecaprenyl-pyrophosphoryl-MurNAc-pentapeptide (lipid intermediate I) to form undecaprenyl-pyrophosphoryl-MurNAc-(pentapeptide)GlcNAc (lipid intermediate II). The sequence is that of UDP-N-acetylglucosamine--N-acetylmuramyl-(pentapeptide) pyrophosphoryl-undecaprenol N-acetylglucosamine transferase from Mycobacterium sp. (strain KMS).